Consider the following 89-residue polypeptide: Large ribosomal subunit protein eL34 (89 aa).

Residues 45–71 (GIPRGRPVEMRKLPKTKKRPERPMPHL) are disordered.

Belongs to the eukaryotic ribosomal protein eL34 family. As to quaternary structure, part of the 50S ribosomal subunit.

This chain is Large ribosomal subunit protein eL34, found in Pyrococcus furiosus (strain ATCC 43587 / DSM 3638 / JCM 8422 / Vc1).